We begin with the raw amino-acid sequence, 708 residues long: Fatty acid oxidation complex subunit alpha (708 aa).

An enoyl-CoA hydratase region spans residues Met1 to Pro190. A 3-hydroxyacyl-CoA dehydrogenase region spans residues Asp310–Gln708.

In the N-terminal section; belongs to the enoyl-CoA hydratase/isomerase family. This sequence in the central section; belongs to the 3-hydroxyacyl-CoA dehydrogenase family. In terms of assembly, heterotetramer of two alpha chains (FadJ) and two beta chains (FadI).

It is found in the cytoplasm. The catalysed reaction is a (3S)-3-hydroxyacyl-CoA = a (2E)-enoyl-CoA + H2O. The enzyme catalyses a 4-saturated-(3S)-3-hydroxyacyl-CoA = a (3E)-enoyl-CoA + H2O. It carries out the reaction a (3S)-3-hydroxyacyl-CoA + NAD(+) = a 3-oxoacyl-CoA + NADH + H(+). It catalyses the reaction (3S)-3-hydroxybutanoyl-CoA = (3R)-3-hydroxybutanoyl-CoA. The protein operates within lipid metabolism; fatty acid beta-oxidation. Functionally, catalyzes the formation of a hydroxyacyl-CoA by addition of water on enoyl-CoA. Also exhibits 3-hydroxyacyl-CoA epimerase and 3-hydroxyacyl-CoA dehydrogenase activities. This Idiomarina loihiensis (strain ATCC BAA-735 / DSM 15497 / L2-TR) protein is Fatty acid oxidation complex subunit alpha.